The primary structure comprises 383 residues: Protein delta homolog 1 (383 aa).

The first 23 residues, 1–23 (MIATGALLRVLLLLLAFGHSTYG), serve as a signal peptide directing secretion. 6 EGF-like domains span residues 24-55 (AECDPACDPQHGFCEADNVCRCEPGWEGPLCE), 59-86 (TSPGCVNGLCEEPWQCVCKEGWDGKFCE), 88-125 (DIRACTSTPCANNGTCVDLEKGQYECSCTPGFSGKDCQ), 127-168 (KAGP…NFCE), 170-206 (VTNSCTPNPCENDGVCTDIGGDFRCRCPAGFVDKTCS), and 208-245 (PVSNCASGPCLNGGTCLQHTQVSFECLCKPPFMGPTCA). Topologically, residues 24 to 306 (AECDPACDPQ…PLLTEGQAIC (283 aa)) are extracellular. Intrachain disulfides connect cysteine 26-cysteine 37, cysteine 30-cysteine 43, cysteine 45-cysteine 54, cysteine 63-cysteine 68, cysteine 76-cysteine 85, cysteine 92-cysteine 103, cysteine 97-cysteine 113, cysteine 115-cysteine 124, cysteine 131-cysteine 144, cysteine 138-cysteine 156, cysteine 158-cysteine 167, cysteine 174-cysteine 185, cysteine 179-cysteine 194, cysteine 196-cysteine 205, cysteine 212-cysteine 223, cysteine 217-cysteine 233, and cysteine 235-cysteine 244. A helical transmembrane segment spans residues 307–327 (FTILGVLTSLVVLGTVAIVFL). Over 328 to 383 (NKCEAWVSNLRYNHMLRKKKNLLLQYNSGEELAVNIIFPEKIDMTTFNKEAGDEDI) the chain is Cytoplasmic.

In terms of assembly, monomer. Interacts with SH3RF2. Glycosylated. In terms of tissue distribution, pancreas and adrenal glands (at protein level).

Its subcellular location is the membrane. It is found in the cytoplasm. May have a role in neuroendocrine differentiation. Inhibits adipocyte differentiation. The sequence is that of Protein delta homolog 1 (Dlk1) from Rattus norvegicus (Rat).